The sequence spans 205 residues: ATP synthase subunit b (205 aa).

A helical transmembrane segment spans residues 51-69; that stretch reads FAWRCLDFAVLLAIVVWAL.

Belongs to the ATPase B chain family. F-type ATPases have 2 components, F(1) - the catalytic core - and F(0) - the membrane proton channel. F(1) has five subunits: alpha(3), beta(3), gamma(1), delta(1), epsilon(1). F(0) has three main subunits: a(1), b(2) and c(10-14). The alpha and beta chains form an alternating ring which encloses part of the gamma chain. F(1) is attached to F(0) by a central stalk formed by the gamma and epsilon chains, while a peripheral stalk is formed by the delta and b chains.

Its subcellular location is the cell inner membrane. F(1)F(0) ATP synthase produces ATP from ADP in the presence of a proton or sodium gradient. F-type ATPases consist of two structural domains, F(1) containing the extramembraneous catalytic core and F(0) containing the membrane proton channel, linked together by a central stalk and a peripheral stalk. During catalysis, ATP synthesis in the catalytic domain of F(1) is coupled via a rotary mechanism of the central stalk subunits to proton translocation. Functionally, component of the F(0) channel, it forms part of the peripheral stalk, linking F(1) to F(0). The protein is ATP synthase subunit b of Geotalea uraniireducens (strain Rf4) (Geobacter uraniireducens).